A 223-amino-acid polypeptide reads, in one-letter code: MEDVKLEFPSLPQCKEDAEEWTYPMRREMQEILPGLFLGPYSSAMKSKLPILQKHGITHIICIRQNIEANFIKPNFQQLFRYLVLDIADNPVENIIRFFPMTKEFIDGSLQMGGKVLVHGNAGISRSAAFVIAYIMETFGMKYRDAFAYVQERRFCINPNAGFVHQLQEYEAIYLAKLTIQMMSPLQIERSLSVHSGTTGSLKRTHEEEDDFGTMQVATAQNG.

One can recognise a Tyrosine-protein phosphatase domain in the interval glutamate 28–alanine 176. The Interaction with FBXW7 motif lies at phenylalanine 76–glutamine 78. Serine 184, serine 193, and serine 201 each carry phosphoserine. The segment at glycine 197–glycine 223 is disordered.

This sequence belongs to the protein-tyrosine phosphatase family. Non-receptor class subfamily. As to quaternary structure, interacts with MAPK1; independently of MAPK1 phosphorylation status. Interacts with CARHSP1/Crhsp-24. Interacts (via FQQ motif) with FBXW7 (via F-box domain); the interaction is direct and prevents FBXW7 interaction with SKP1, a component of the SCF(FBXW7) complex.

It localises to the nucleus. The protein resides in the cytoplasm. The protein localises to the cytosol. Functionally, catalytically inactive phosphatase. Acts as a nuclear anchor for MAPK1/MAPK3 (ERK1/ERK2). Modulates cell-fate decisions and cell migration by spatiotemporal regulation of MAPK1/MAPK3 (ERK1/ERK2). By binding to the F-box of FBXW7, prevents the assembly of FBXW7 into the SCF E3 ubiquitin-protein ligase complex, and thereby inhibits degradation of its substrates. Plays a role in spermatogenesis. The polypeptide is Serine/threonine/tyrosine-interacting protein (STYX) (Pongo abelii (Sumatran orangutan)).